We begin with the raw amino-acid sequence, 377 residues long: UPF0754 membrane protein BPUM_0927 (377 aa).

2 helical membrane passes run 1-21 (MNIFTTFLFMIVIGAVIGAAT) and 357-377 (FLGGFLGGLIGAIQAIFVTLF).

This sequence belongs to the UPF0754 family.

It is found in the cell membrane. This chain is UPF0754 membrane protein BPUM_0927, found in Bacillus pumilus (strain SAFR-032).